Consider the following 34-residue polypeptide: Photosystem I reaction center subunit XII (34 aa).

The helical transmembrane segment at 5 to 25 (ISSPEIFIALVVAAHAAILAL) threads the bilayer.

It belongs to the PsaM family.

Its subcellular location is the cellular thylakoid membrane. The chain is Photosystem I reaction center subunit XII from Synechococcus sp. (strain CC9902).